We begin with the raw amino-acid sequence, 130 residues long: Small ribosomal subunit protein eS8 (130 aa).

The protein belongs to the eukaryotic ribosomal protein eS8 family. As to quaternary structure, part of the 30S ribosomal subunit.

The chain is Small ribosomal subunit protein eS8 from Thermococcus gammatolerans (strain DSM 15229 / JCM 11827 / EJ3).